A 355-amino-acid chain; its full sequence is RNA binding protein fox-1 homolog 1 (355 aa).

The tract at residues 1-123 is disordered; it reads MNCEREQLRG…QPKRLHVSNI (123 aa). The segment covering 70 to 112 has biased composition (polar residues); sequence QSHSEQSAADTSAHTVSGTATTDDSAPTDGQPQTQPSENTENK. Residues 116-174 enclose the RRM domain; it reads KRLHVSNIPFRFRDPDLRQMFGGFGFVTFENSADADRAREKLHGTVVEGRKIEVNNATA. Position 298 is an asymmetric dimethylarginine (R298).

As to quaternary structure, binds to the C-terminus of ATXN2.

The protein localises to the nucleus. It is found in the cytoplasm. Functionally, RNA-binding protein that regulates alternative splicing events by binding to 5'-UGCAUGU-3' elements. Prevents binding of U2AF2 to the 3'-splice site. Regulates alternative splicing of tissue-specific exons and of differentially spliced exons during erythropoiesis. The sequence is that of RNA binding protein fox-1 homolog 1 (RBFOX1) from Bos taurus (Bovine).